The following is a 337-amino-acid chain: Methylthioribose-1-phosphate isomerase (337 aa).

Residues Arg47–Ala49, Arg81, and Gln184 each bind substrate. Residue Asp225 is the Proton donor of the active site. Asn235 to Lys236 contributes to the substrate binding site.

Belongs to the eIF-2B alpha/beta/delta subunits family. MtnA subfamily.

The enzyme catalyses 5-(methylsulfanyl)-alpha-D-ribose 1-phosphate = 5-(methylsulfanyl)-D-ribulose 1-phosphate. Its pathway is amino-acid biosynthesis; L-methionine biosynthesis via salvage pathway; L-methionine from S-methyl-5-thio-alpha-D-ribose 1-phosphate: step 1/6. In terms of biological role, catalyzes the interconversion of methylthioribose-1-phosphate (MTR-1-P) into methylthioribulose-1-phosphate (MTRu-1-P). This is Methylthioribose-1-phosphate isomerase from Parasynechococcus marenigrum (strain WH8102).